The primary structure comprises 367 residues: Transcription factor aptf-2 (367 aa).

The disordered stretch occupies residues 29 to 49 (VPATKETGPSSSAECSTQPAV). Residues 36–47 (GPSSSAECSTQP) show a composition bias toward polar residues. Residues 220–354 (AKQKAFPNKV…GVASELRRLT (135 aa)) are H-S-H (helix-span-helix), dimerization.

The protein belongs to the AP-2 family. In terms of assembly, binds DNA as a dimer.

It is found in the nucleus. The protein localises to the cytoplasm. Its function is as follows. Sequence-specific DNA-binding protein that interacts with enhancer elements to regulate transcription of selected genes. Required for neuroblast and epidermal morphogenesis, perhaps acting in cooperation with transcription factor aptf-4. The chain is Transcription factor aptf-2 from Caenorhabditis elegans.